The sequence spans 209 residues: uncharacterized protein (209 aa).

The 167-residue stretch at 1 to 167 (MRNSAGLFMI…LNTYASSNYG (167 aa)) folds into the Nudix hydrolase domain.

This is an uncharacterized protein from Orgyia pseudotsugata (Douglas-fir tussock moth).